The chain runs to 322 residues: Ribokinase (322 aa).

Residues 25 to 27, 53 to 57, and Glu154 each bind substrate; these read MTD and GKGAN. Residues Asn199, 235–240, and Thr256 each bind ATP; that span reads TLGAEG. K(+) contacts are provided by Asp263 and Thr265. Residues 268–269 and Asn295 each bind ATP; that span reads GD. Residue Asp269 coordinates substrate. Asp269 acts as the Proton acceptor in catalysis. Residues Ser301, Ala304, Gly306, and Ser310 each coordinate K(+).

Belongs to the carbohydrate kinase PfkB family. Ribokinase subfamily. Homodimer. Requires Mg(2+) as cofactor.

Its subcellular location is the cytoplasm. It is found in the nucleus. It catalyses the reaction D-ribose + ATP = D-ribose 5-phosphate + ADP + H(+). Its pathway is carbohydrate metabolism; D-ribose degradation; D-ribose 5-phosphate from beta-D-ribopyranose: step 2/2. With respect to regulation, activated by a monovalent cation that binds near, but not in, the active site. The most likely occupant of the site in vivo is potassium. Ion binding induces a conformational change that may alter substrate affinity. Competitively inhibited by phosphonoacetic acid, etidronate, 2-carboxethylphosphonic acid, N-(phosphonomethyl)glycine, N-(phosphonomethyl)iminodiacetic acid and clodronate. Its function is as follows. Catalyzes the phosphorylation of ribose at O-5 in a reaction requiring ATP and magnesium. The resulting D-ribose-5-phosphate can then be used either for sythesis of nucleotides, histidine, and tryptophan, or as a component of the pentose phosphate pathway. This Homo sapiens (Human) protein is Ribokinase.